We begin with the raw amino-acid sequence, 213 residues long: Protein Syd (213 aa).

It belongs to the Syd family.

The protein resides in the cell inner membrane. In terms of biological role, interacts with the SecY protein in vivo. May bind preferentially to an uncomplexed state of SecY, thus functioning either as a chelating agent for excess SecY in the cell or as a regulatory factor that negatively controls the translocase function. The polypeptide is Protein Syd (Shewanella halifaxensis (strain HAW-EB4)).